The primary structure comprises 366 residues: Cobalt-precorrin-5B C(1)-methyltransferase (366 aa).

This sequence belongs to the CbiD family.

It catalyses the reaction Co-precorrin-5B + S-adenosyl-L-methionine = Co-precorrin-6A + S-adenosyl-L-homocysteine. The protein operates within cofactor biosynthesis; adenosylcobalamin biosynthesis; cob(II)yrinate a,c-diamide from sirohydrochlorin (anaerobic route): step 6/10. Catalyzes the methylation of C-1 in cobalt-precorrin-5B to form cobalt-precorrin-6A. In Pseudomonas paraeruginosa (strain DSM 24068 / PA7) (Pseudomonas aeruginosa (strain PA7)), this protein is Cobalt-precorrin-5B C(1)-methyltransferase.